The chain runs to 417 residues: Serine hydroxymethyltransferase (417 aa).

(6S)-5,6,7,8-tetrahydrofolate is bound by residues leucine 121 and 125–127 (GHL). Lysine 229 bears the N6-(pyridoxal phosphate)lysine mark. A (6S)-5,6,7,8-tetrahydrofolate-binding site is contributed by 355–357 (SPF).

This sequence belongs to the SHMT family. In terms of assembly, homodimer. Pyridoxal 5'-phosphate is required as a cofactor.

It is found in the cytoplasm. It catalyses the reaction (6R)-5,10-methylene-5,6,7,8-tetrahydrofolate + glycine + H2O = (6S)-5,6,7,8-tetrahydrofolate + L-serine. Its pathway is one-carbon metabolism; tetrahydrofolate interconversion. It functions in the pathway amino-acid biosynthesis; glycine biosynthesis; glycine from L-serine: step 1/1. In terms of biological role, catalyzes the reversible interconversion of serine and glycine with tetrahydrofolate (THF) serving as the one-carbon carrier. This reaction serves as the major source of one-carbon groups required for the biosynthesis of purines, thymidylate, methionine, and other important biomolecules. Also exhibits THF-independent aldolase activity toward beta-hydroxyamino acids, producing glycine and aldehydes, via a retro-aldol mechanism. This is Serine hydroxymethyltransferase from Shewanella baltica (strain OS185).